The following is a 54-amino-acid chain: Rubredoxin (54 aa).

Met-1 is modified (N-formylmethionine). In terms of domain architecture, Rubredoxin-like spans 1–54 (MKKYTCTVCGYIYNPEDGDPDNGVNPGTDFKDIPDDWVCPLCGVGKDQFEEVEE). Fe cation is bound by residues Cys-6, Cys-9, Cys-39, and Cys-42.

This sequence belongs to the rubredoxin family. Requires Fe(3+) as cofactor.

Rubredoxin is a small nonheme, iron protein lacking acid-labile sulfide. Its single Fe, chelated to 4 Cys, functions as an electron acceptor and may also stabilize the conformation of the molecule. The sequence is that of Rubredoxin from Clostridium pasteurianum.